Consider the following 483-residue polypeptide: UDP-glycosyltransferase 85C1 (483 aa).

UDP-alpha-D-glucose contacts are provided by residues S304, 360 to 361 (WC), 378 to 386 (HCGWGSIIE), and 400 to 403 (IGDQ).

This sequence belongs to the UDP-glycosyltransferase family.

In terms of biological role, may glycosylate diterpenes or flavonols in leaves. The sequence is that of UDP-glycosyltransferase 85C1 from Stevia rebaudiana (Stevia).